Consider the following 196-residue polypeptide: Probable malonic semialdehyde reductase RutE (196 aa).

It belongs to the nitroreductase family. HadB/RutE subfamily. Requires FMN as cofactor.

It carries out the reaction 3-hydroxypropanoate + NADP(+) = 3-oxopropanoate + NADPH + H(+). May reduce toxic product malonic semialdehyde to 3-hydroxypropionic acid, which is excreted. This is Probable malonic semialdehyde reductase RutE from Escherichia coli O157:H7.